The chain runs to 220 residues: Probable nicotinate-nucleotide adenylyltransferase (220 aa).

Belongs to the NadD family.

It catalyses the reaction nicotinate beta-D-ribonucleotide + ATP + H(+) = deamido-NAD(+) + diphosphate. The protein operates within cofactor biosynthesis; NAD(+) biosynthesis; deamido-NAD(+) from nicotinate D-ribonucleotide: step 1/1. Catalyzes the reversible adenylation of nicotinate mononucleotide (NaMN) to nicotinic acid adenine dinucleotide (NaAD). The chain is Probable nicotinate-nucleotide adenylyltransferase from Yersinia pseudotuberculosis serotype O:1b (strain IP 31758).